Reading from the N-terminus, the 446-residue chain is Golgi reassembly-stacking protein 1 (446 aa).

Positions 1–20 (MGLGASSEQPAGGEGFHLHG) are disordered. A lipid anchor (N-myristoyl glycine) is attached at Gly-2. PDZ GRASP-type domains are found at residues 14–104 (EGFH…FCSF) and 110–198 (HVWH…YGYL). A GRASP region spans residues 14–214 (EGFHLHGVQE…PSSQHKKPPG (201 aa)). Zn(2+) contacts are provided by His-17, His-19, and Cys-102. Residues 189 to 201 (LGCGIGYGYLHRI) form an essential for interaction with GOLGA2/GM130 region. 2 disordered regions span residues 202–252 (PTQP…LGSR) and 343–446 (VSGP…EPGL). 3 positions are modified to phosphothreonine: Thr-216, Thr-220, and Thr-224. Residues 343-354 (VSGPEDIGSSSS) are compositionally biased toward low complexity. Phosphoserine occurs at positions 365, 367, and 376.

The protein belongs to the GORASP family. Homodimer. Forms higher-order oligomers under interphase but not mitotic conditions. Dimers of the protein on one membrane might be able to interact with dimers on another and so stack cisternae. Interacts with the C-terminus of GOLGA2/GM130 under both mitotic and non-mitotic conditions. The interaction is critical for the correct targeting of both proteins to the cis-Golgi. Interacts with TMED2 and TMED3. Phosphorylated by CDC2/B1 and PLK kinases during mitosis. Phosphorylation cycle correlates with the cisternal stacking cycle. Phosphorylation of the homodimer prevents the association of dimers into higher-order oligomers, leading to cisternal unstacking. In terms of processing, target for caspase-3 cleavage during apoptosis. The cleavage contributes to Golgi fragmentation and occurs very early in the execution phase of apoptosis. Post-translationally, myristoylated.

The protein resides in the golgi apparatus. Its subcellular location is the cis-Golgi network membrane. In terms of biological role, key structural protein of the Golgi apparatus. The membrane cisternae of the Golgi apparatus adhere to each other to form stacks, which are aligned side by side to form the Golgi ribbon. Acting in concert with GORASP2/GRASP55, is required for the formation and maintenance of the Golgi ribbon, and may be dispensable for the formation of stacks. However, other studies suggest that GORASP1 plays an important role in assembly and membrane stacking of the cisternae, and in the reassembly of Golgi stacks after breakdown during mitosis. Caspase-mediated cleavage of GORASP1 is required for fragmentation of the Golgi during apoptosis. Also mediates, via its interaction with GOLGA2/GM130, the docking of transport vesicles with the Golgi membranes. Mediates ER stress-induced unconventional (ER/Golgi-independent) trafficking of core-glycosylated CFTR to cell membrane. In Mus musculus (Mouse), this protein is Golgi reassembly-stacking protein 1 (Gorasp1).